The sequence spans 126 residues: Holo-[acyl-carrier-protein] synthase (126 aa).

Mg(2+)-binding residues include D9 and E58.

It belongs to the P-Pant transferase superfamily. AcpS family. Mg(2+) serves as cofactor.

The protein localises to the cytoplasm. It catalyses the reaction apo-[ACP] + CoA = holo-[ACP] + adenosine 3',5'-bisphosphate + H(+). Its function is as follows. Transfers the 4'-phosphopantetheine moiety from coenzyme A to a Ser of acyl-carrier-protein. This chain is Holo-[acyl-carrier-protein] synthase, found in Aliivibrio fischeri (strain MJ11) (Vibrio fischeri).